The following is a 295-amino-acid chain: MVAKVLDGLAVSAGIFERLHRACCELENNGVCPKLATVLVGNNPASRSYVLSKHRDCNNIGIQSTLIELPANTSEKELISKVEILNASSDVSGIIVQLPLPESIDQNKVIEAINPDKDADGLHPLNLGYLVTGKQGIVPCTPAGIVKLLEAHRITLEGKTIAVIGRGTTVGRPLGILLSGKGVNATVINIHSRSRNISGLSRIADVVVACAGVKHIVEPSWIKPGAVVVDVGINQSGVSSSGKMILTGDVHPLTKNIASYISPVVGGVGPMTRAMLMSNVINLSERDFRKRLYAS.

Residues 165 to 167, Ser-192, and Ile-233 each bind NADP(+); that span reads GRG.

It belongs to the tetrahydrofolate dehydrogenase/cyclohydrolase family. Homodimer.

It catalyses the reaction (6R)-5,10-methylene-5,6,7,8-tetrahydrofolate + NADP(+) = (6R)-5,10-methenyltetrahydrofolate + NADPH. It carries out the reaction (6R)-5,10-methenyltetrahydrofolate + H2O = (6R)-10-formyltetrahydrofolate + H(+). Its pathway is one-carbon metabolism; tetrahydrofolate interconversion. Functionally, catalyzes the oxidation of 5,10-methylenetetrahydrofolate to 5,10-methenyltetrahydrofolate and then the hydrolysis of 5,10-methenyltetrahydrofolate to 10-formyltetrahydrofolate. The sequence is that of Bifunctional protein FolD from Tropheryma whipplei (strain TW08/27) (Whipple's bacillus).